The chain runs to 404 residues: Zinc finger protein zfs1 (404 aa).

Residues 134–149 show a composition bias toward polar residues; sequence SYLHSGSSPHGNTSNH. Disordered stretches follow at residues 134–168 and 259–322; these read SYLH…TGSG and SNAS…APNG. Low complexity predominate over residues 150–168; that stretch reads PSPISSLESLPSRSSTGSG. The segment covering 259–283 has biased composition (polar residues); the sequence is SNASIRNAPSNLSKQFSPSGNSPLT. Residues 304–317 are compositionally biased toward low complexity; that stretch reads GSASHPHGSGSSNG. 2 consecutive C3H1-type zinc fingers follow at residues 326–354 and 364–392; these read LYKT…HGNQ and KYKS…HDES.

In terms of assembly, interacts with moc3.

The protein resides in the cytoplasm. It is found in the nucleus. In terms of biological role, binds to specific AU-rich elements (ARE) in the 3'-untranslated region of target mRNAs and promotes their degradation. Binds to ARE present in the arz1 mRNA and stimulates the rate of arz1 mRNA decay. Required for coordination of septum formation with exit from mitosis. Involved in the mating response pathway. Induces sexual development and ascus formation. The chain is Zinc finger protein zfs1 (zfs1) from Schizosaccharomyces pombe (strain 972 / ATCC 24843) (Fission yeast).